The primary structure comprises 253 residues: HTH-type transcriptional regulator YdeO (253 aa).

Residues 137–233 enclose the HTH araC/xylS-type domain; it reads GKVRNIVNMK…GNSPKRVSKE (97 aa). 2 consecutive DNA-binding regions (H-T-H motif) follow at residues 154 to 175 and 200 to 223; these read KDIC…KQEQ and VNKI…RKHF.

Induces the expression of gadE and mdtEF. Could also regulate the expression of other genes involved in acid resistance. The protein is HTH-type transcriptional regulator YdeO (ydeO) of Escherichia coli O6:H1 (strain CFT073 / ATCC 700928 / UPEC).